Consider the following 263-residue polypeptide: MSLESLFQHIIFTEHQAEESRRVMREVRSEIARCRGKIKKATEDLNEEKIKLESKVQQFSEKTFLLELLKTRENALERQCSAIVSERDRLLQACEAIKKKTTEQEERFIKEITDFNDNYEITKKRDALMEEDIKLEMADLENQAEALRGEMKSMEYNSGQLQELQKLKSELLQELFTLQKKLKVLKDEETEAICITKHLEAEKIKIREKPQHDPECVRRLKRELDLYKEEDMESVCRALQIEVDLLESTLVPKDPQDNNSLSR.

Positions 13-191 form a coiled coil; sequence TEHQAEESRR…LKVLKDEETE (179 aa).

It belongs to the CCDC172 family. As to quaternary structure, may interact with TEKT2. Detected in spermatozoa (at protein level). Predominantly expressed in testis and in spermatozoa from the caput and corpus epididymis.

It localises to the cytoplasm. Its subcellular location is the cell projection. The protein resides in the cilium. This Rattus norvegicus (Rat) protein is Coiled-coil domain-containing protein 172 (Ccdc172).